We begin with the raw amino-acid sequence, 557 residues long: Iron-sulfur cluster assembly SufBD family protein ABCI8, chloroplastic (557 aa).

Residues 1-47 are disordered; the sequence is MASLLANGISSFSPQPTSDSSKSPKGFHPKPESLKFPSPKSLNPTRP. The N-terminal 52 residues, 1–52, are a transit peptide targeting the chloroplast; sequence MASLLANGISSFSPQPTSDSSKSPKGFHPKPESLKFPSPKSLNPTRPIFKLR. Residues 10–24 are compositionally biased toward low complexity; the sequence is SSFSPQPTSDSSKSP.

It belongs to the iron-sulfur cluster assembly SufBD family.

The protein localises to the plastid. It localises to the chloroplast. Its function is as follows. Involved in light signaling, probably by mediating the transport and correct distribution of protoporphyrin IX, a chlorophyll precursor, in response to far-red light. The protein is Iron-sulfur cluster assembly SufBD family protein ABCI8, chloroplastic (ABCI8) of Arabidopsis thaliana (Mouse-ear cress).